The sequence spans 500 residues: MTIFDNYEVWFVIGSQHLYGPETLRQVTQHAEHVVNALNTEAKLPCKLVLKPLGTTPDEITAICRDANYDDRCAGLVVWLHTFSPAKMWINGLTMLNKPLLQFHTQFNAALPWDSIDMDFMNLNQTAHGGREFGFIGARMRQQHAVVTGHWQDKQAHERIGSWMRQAVSKQDTRHLKVCRFGDNMREVAVTDGDKVAAQIKFGFSVNTWAVGDLVQVVNSISDGDVNALVDEYESCYTMTPATQIHGEKRQNVLEAARIELGMKRFLEQGGFHAFTTTFEDLHGLKQLPGLAVQRLMQQGYGFAGEGDWKTAALLRIMKVMSTGLQGGTSFMEDYTYHFEKGNDLVLGSHMLEVCPSIAVEEKPILDVQHLGIGGKDDPARLIFNTQTGPAIVASLIDLGDRYRLLVNCIDTVKTPHSLPKLPVANALWKAQPDLPSASEAWILAGGAHHTVFSHALNLNDMRQFAEMHDIEITVIDNDTRLPAFKDALRWNEVYYGFRR.

Positions 306, 333, 350, and 450 each coordinate Mn(2+).

The protein belongs to the arabinose isomerase family. Homohexamer. Mn(2+) serves as cofactor.

The catalysed reaction is beta-L-arabinopyranose = L-ribulose. Its pathway is carbohydrate degradation; L-arabinose degradation via L-ribulose; D-xylulose 5-phosphate from L-arabinose (bacterial route): step 1/3. In terms of biological role, catalyzes the conversion of L-arabinose to L-ribulose. The chain is L-arabinose isomerase from Escherichia coli O6:H1 (strain CFT073 / ATCC 700928 / UPEC).